The chain runs to 225 residues: Transcriptional regulatory protein CssR (225 aa).

Residues 4 to 117 form the Response regulatory domain; it reads TIYLVEDEDN…ELIIRVQKLL (114 aa). Residue aspartate 52 is modified to 4-aspartylphosphate. Positions 129–224 form a DNA-binding region, ompR/PhoB-type; the sequence is KNEIAVSSYR…IYGFGYRMMS (96 aa).

In terms of processing, phosphorylated by CssS.

It is found in the cytoplasm. Member of the two-component regulatory system CssS/CssR required to control the cellular response to secretion stress. This chain is Transcriptional regulatory protein CssR (cssR), found in Bacillus subtilis (strain 168).